Consider the following 491-residue polypeptide: Sucrose transport protein SUC9 (491 aa).

The span at 1 to 12 (MSDIQAKEDAAP) shows a compositional bias: basic and acidic residues. Positions 1-26 (MSDIQAKEDAAPVDRQSSSSVVVPDE) are disordered. Residues 1–33 (MSDIQAKEDAAPVDRQSSSSVVVPDEPSPLRKM) lie on the Cytoplasmic side of the membrane. A Phosphoserine modification is found at serine 17. Residues 34–54 (ISVASIAAGIQFGWALQLSLL) form a helical membrane-spanning segment. The Extracellular segment spans residues 55 to 68 (TPYVQLLGVPHKWS). A helical transmembrane segment spans residues 69–89 (SFIWLCGPISGLLVQPTVGYF). Residues 90–101 (SDRCKSRFGRRR) lie on the Cytoplasmic side of the membrane. The helical transmembrane segment at 102–122 (PFIATGALLVALAVILIGFAA) threads the bilayer. Over 123–139 (DFGHTMGDKLDEAVKIR) the chain is Extracellular. The chain crosses the membrane as a helical span at residues 140 to 160 (AVGFFVVGFWILDVANNTLQG). The Cytoplasmic portion of the chain corresponds to 161–181 (PCRAFLGDLAAGDAKKTRTAN). The helical transmembrane segment at 182 to 202 (AIFSFFMAVGNVLGYAAGSYT) threads the bilayer. Over 203-224 (NLHKIFPFTVTKACDIYCANLK) the chain is Extracellular. Residues 225 to 245 (SCFIISITLLIVLTIIALWYV) traverse the membrane as a helical segment. The Cytoplasmic portion of the chain corresponds to 246–277 (EDKQWSPNADSDNEKTPFFGEIFGAFKVMKRP). The helical transmembrane segment at 278-298 (MWMLLAVTALNWIAWFPFLLY) threads the bilayer. Residues 299–329 (DTDWMGREVYGGDSAGDDKMKKLYNHGIQVG) are Extracellular-facing. The helical transmembrane segment at 330–350 (SLGLMLNSIVLGVMSLVIGVI) threads the bilayer. The Cytoplasmic segment spans residues 351–358 (SKKIGAKR). Residues 359 to 379 (LWGAVNIILAVCLAMTVLVTK) form a helical membrane-spanning segment. Over 380-406 (KAEEHRKIAGRMALPTNAIRDGALSLF) the chain is Extracellular. Residues 407–427 (AILGIPLAITFSIPFALASII) form a helical membrane-spanning segment. The Cytoplasmic portion of the chain corresponds to 428–443 (SSSSGAGQGLSLGVLN). Residues 444–464 (MAIVIPQMIVSFGVGPIDALF) form a helical membrane-spanning segment. The Extracellular segment spans residues 465–468 (GGGN). The helical transmembrane segment at 469–489 (LPGFVVGAIAALISSVVALTV) threads the bilayer. Residues 490 to 491 (LP) lie on the Cytoplasmic side of the membrane.

Belongs to the glycoside-pentoside-hexuronide (GPH) cation symporter transporter (TC 2.A.2.4) family. In terms of tissue distribution, widely expressed.

It localises to the cell membrane. The enzyme catalyses sucrose(out) + H(+)(out) = sucrose(in) + H(+)(in). Its pathway is glycan biosynthesis; sucrose metabolism. Inhibited by protonophores (e.g. carbonyl cyanide m-chlorophenyl-hydrazone (CCCP)) and SH group inhibitors (e.g. p-chloromercuribenzene sulphonic acid (PCMBS)). High-affinity sucrose transporter. Responsible for the transport of sucrose into the cell, with the concomitant uptake of protons (symport system). Can also transport a wide range of glucosides, such as helicin, salicin, arbutin, maltose, fraxin, esculin, uranose, alpha-methylglucoside, alpha-phenylglucoside and beta-phenylglucoside. Plays a role in flowering time transition delay. The sequence is that of Sucrose transport protein SUC9 from Arabidopsis thaliana (Mouse-ear cress).